A 668-amino-acid polypeptide reads, in one-letter code: Threonine--tRNA ligase (668 aa).

One can recognise a TGS domain in the interval methionine 1–arginine 64. The catalytic stretch occupies residues aspartate 245 to proline 553. Zn(2+) is bound by residues cysteine 347, histidine 398, and histidine 530.

Belongs to the class-II aminoacyl-tRNA synthetase family. In terms of assembly, homodimer. Requires Zn(2+) as cofactor.

The protein resides in the cytoplasm. The catalysed reaction is tRNA(Thr) + L-threonine + ATP = L-threonyl-tRNA(Thr) + AMP + diphosphate + H(+). Functionally, catalyzes the attachment of threonine to tRNA(Thr) in a two-step reaction: L-threonine is first activated by ATP to form Thr-AMP and then transferred to the acceptor end of tRNA(Thr). Also edits incorrectly charged L-seryl-tRNA(Thr). In Rhizobium etli (strain ATCC 51251 / DSM 11541 / JCM 21823 / NBRC 15573 / CFN 42), this protein is Threonine--tRNA ligase.